A 215-amino-acid chain; its full sequence is Ras-related protein Rab-5A (215 aa).

Positions 29, 30, 32, 33, 34, 35, 46, 47, 52, and 78 each coordinate GTP. S34 is a binding site for Mg(2+). 2 short sequence motifs (switch) span residues 44–56 and 77–93; these read QFHEFQESTIGAA and AGQERYHSLAPMYYRGA. Residue T52 participates in Mg(2+) binding. S84 is modified (phosphoserine). Positions 133, 134, 136, 164, and 165 each coordinate GTP. Residues 181–215 form a disordered region; that stretch reads LPKNEPQNPGANSARGRGVDLTEPAQPARSQCCSN. S-geranylgeranyl cysteine attachment occurs at residues C212 and C213.

The protein belongs to the small GTPase superfamily. Rab family. In terms of assembly, interacts with GDI1; this promotes dissociation from membranes; phosphorylation at Ser-84 disrupts this interaction. Interacts with GDI2; phosphorylation at Ser-84 disrupts the interaction. Interacts with EEA1. Interacts with RIN1 and GAPVD1, which regulate its pathway, probably by acting as a GEF. Interacts with ALS2CL, SUN2, ZFYVE20 and RUFY1. Interacts with RABEP1; one RABEP1 homodimer binds two RAB5A chains, but at opposite sides of the dimer. Interacts with SGSM1, SGSM3 and PIK3CB. Interacts with RINL. May be a component of a complex composed of RAB5A, DYN2 and PIK3C3. Does not interact with the BLOC-3 complex (heterodimer of HPS1 and HPS4). Interacts with CLN5. Interacts with APPL2. Interacts with F8A1/F8A2/F8A3. Found in a complex with F8A1/F8A2/F8A3, HTT and RAB5A; mediates the recruitment of HTT by RAB5A onto early endosomes. Interacts with ATP9A. Interacts with PPP1R21; mediates the recruitment of FERRY complex by RAB5A onto early endosomes. Mg(2+) serves as cofactor. Phosphorylation of Ser-84 in the switch II region by LRRK2 prevents the association of RAB regulatory proteins, including RAB GDP dissociation inhibitors GDI1 and GDI2.

It is found in the cell membrane. It localises to the early endosome membrane. Its subcellular location is the melanosome. The protein resides in the cytoplasmic vesicle. The protein localises to the cell projection. It is found in the ruffle. It localises to the membrane. Its subcellular location is the cytoplasm. The protein resides in the cytosol. The protein localises to the phagosome membrane. It is found in the endosome membrane. It carries out the reaction GTP + H2O = GDP + phosphate + H(+). With respect to regulation, regulated by guanine nucleotide exchange factors (GEFs) including RINL, which promote the exchange of bound GDP for free GTP. Regulated by GTPase activating proteins (GAPs) which increase the GTP hydrolysis activity. Inhibited by GDP dissociation inhibitors (GDIs). The small GTPases Rab are key regulators of intracellular membrane trafficking, from the formation of transport vesicles to their fusion with membranes. Rabs cycle between an inactive GDP-bound form and an active GTP-bound form that is able to recruit to membranes different sets of downstream effectors directly responsible for vesicle formation, movement, tethering and fusion. RAB5A is required for the fusion of plasma membranes and early endosomes. Contributes to the regulation of filopodia extension. Required for the exosomal release of SDCBP, CD63, PDCD6IP and syndecan. Regulates maturation of apoptotic cell-containing phagosomes, probably downstream of DYN2 and PIK3C3. The sequence is that of Ras-related protein Rab-5A from Rattus norvegicus (Rat).